The sequence spans 50 residues: uncharacterized protein (50 aa).

This is an uncharacterized protein from Ornithodoros (relapsing fever ticks).